A 715-amino-acid polypeptide reads, in one-letter code: MSKAHKPWPYRRRSQFSSRKYLKKEMNSFQQQPPPFGTVPPQMMFPPNWQGAEKDAAFLAKDFNFLTLNNQPPPGNRSQPRAMGPENNLYSQYEQKVRPCIDLIDSLRALGVEQDLALPAIAVIGDQSSGKSSVLEALSGVALPRGSGIVTRCPLVLKLKKQPCEAWAGRISYRNTELELQDPGQVEKEIHKAQNVMAGNGRGISHELISLEITSPEVPDLTIIDLPGITRVAVDNQPRDIGLQIKALIKKYIQRQQTINLVVVPCNVDIATTEALSMAHEVDPEGDRTIGILTKPDLMDRGTEKSVMNVVRNLTYPLKKGYMIVKCRGQQEITNRLSLAEATKKEITFFQTHPYFRVLLEEGSATVPRLAERLTTELIMHIQKSLPLLEGQIRESHQKATEELRRCGADIPSQEADKMFFLIEKIKMFNQDIEKLVEGEEVVRENETRLYNKIREDFKNWVGILATNTQKVKNIIHEEVEKYEKQYRGKELLGFVNYKTFEIIVHQYIQQLVEPALSMLQKAMEIIQQAFINVAKKHFGEFFNLNQTVQSTIEDIKVKHTAKAENMIQLQFRMEQMVFCQDQIYSVVLKKVREEIFNPLGTPSQNMKLNSHFPSNESSVSSFTEIGIHLNAYFLETSKRLANQIPFIIQYFMLRENGDSLQKAMMQILQEKNRYSWLLQEQSETATKRRILKERIYRLTQARHALCQFSSKEIH.

The region spanning 115-387 is the Dynamin-type G domain; the sequence is DLALPAIAVI…LIMHIQKSLP (273 aa). The tract at residues 125–132 is G1 motif; it reads GDQSSGKS. 125–132 contributes to the GTP binding site; it reads GDQSSGKS. The G2 motif stretch occupies residues 150 to 152; it reads VTR. The G3 motif stretch occupies residues 225–228; the sequence is DLPG. GTP-binding positions include 225–229 and 294–297; these read DLPGI and TKPD. Residues 294–297 form a G4 motif region; that stretch reads TKPD. Residues 326–329 are G5 motif; that stretch reads KCRG. One can recognise a GED domain in the interval 623–714; sequence FTEIGIHLNA…ALCQFSSKEI (92 aa).

Belongs to the TRAFAC class dynamin-like GTPase superfamily. Dynamin/Fzo/YdjA family.

The protein localises to the cytoplasm. It is found in the nucleus. It localises to the nuclear pore complex. Functionally, interferon-induced dynamin-like GTPase with potent antiviral activity against human immunodeficiency virus type 1 (HIV-1). Acts by targeting the viral capsid and affects the nuclear uptake and/or stability of the HIV-1 replication complex and the subsequent chromosomal integration of the proviral DNA. Exhibits antiviral activity also against simian immunodeficiency virus (SIV-mnd). May play a role in regulating nucleocytoplasmic transport and cell-cycle progression. The sequence is that of Interferon-induced GTP-binding protein Mx2 (MX2) from Homo sapiens (Human).